Reading from the N-terminus, the 553-residue chain is Dihydroxy-acid dehydratase (553 aa).

Residue Asp78 coordinates Mg(2+). Cys119 serves as a coordination point for [2Fe-2S] cluster. Residues Asp120 and Lys121 each contribute to the Mg(2+) site. Lys121 bears the N6-carboxylysine mark. Residue Cys193 coordinates [2Fe-2S] cluster. Glu441 provides a ligand contact to Mg(2+). The active-site Proton acceptor is the Ser467.

It belongs to the IlvD/Edd family. In terms of assembly, homodimer. It depends on [2Fe-2S] cluster as a cofactor. Requires Mg(2+) as cofactor.

The enzyme catalyses (2R)-2,3-dihydroxy-3-methylbutanoate = 3-methyl-2-oxobutanoate + H2O. The catalysed reaction is (2R,3R)-2,3-dihydroxy-3-methylpentanoate = (S)-3-methyl-2-oxopentanoate + H2O. It functions in the pathway amino-acid biosynthesis; L-isoleucine biosynthesis; L-isoleucine from 2-oxobutanoate: step 3/4. Its pathway is amino-acid biosynthesis; L-valine biosynthesis; L-valine from pyruvate: step 3/4. Its function is as follows. Functions in the biosynthesis of branched-chain amino acids. Catalyzes the dehydration of (2R,3R)-2,3-dihydroxy-3-methylpentanoate (2,3-dihydroxy-3-methylvalerate) into 2-oxo-3-methylpentanoate (2-oxo-3-methylvalerate) and of (2R)-2,3-dihydroxy-3-methylbutanoate (2,3-dihydroxyisovalerate) into 2-oxo-3-methylbutanoate (2-oxoisovalerate), the penultimate precursor to L-isoleucine and L-valine, respectively. This Trichlorobacter lovleyi (strain ATCC BAA-1151 / DSM 17278 / SZ) (Geobacter lovleyi) protein is Dihydroxy-acid dehydratase.